Reading from the N-terminus, the 205-residue chain is Ribonuclease HII (205 aa).

The RNase H type-2 domain occupies 16–205 (VSEVGIDEVG…KSFLNQSDLI (190 aa)). Residues aspartate 22, glutamate 23, and aspartate 118 each contribute to the a divalent metal cation site.

This sequence belongs to the RNase HII family. The cofactor is Mn(2+). Mg(2+) serves as cofactor.

It localises to the cytoplasm. The catalysed reaction is Endonucleolytic cleavage to 5'-phosphomonoester.. Functionally, endonuclease that specifically degrades the RNA of RNA-DNA hybrids. In Prochlorococcus marinus (strain MIT 9312), this protein is Ribonuclease HII.